A 139-amino-acid polypeptide reads, in one-letter code: Small ribosomal subunit protein uS19 (139 aa).

This sequence belongs to the universal ribosomal protein uS19 family.

Functionally, protein S19 forms a complex with S13 that binds strongly to the 16S ribosomal RNA. This is Small ribosomal subunit protein uS19 from Methanoregula boonei (strain DSM 21154 / JCM 14090 / 6A8).